The chain runs to 473 residues: Aspartyl/glutamyl-tRNA(Asn/Gln) amidotransferase subunit B (473 aa).

It belongs to the GatB/GatE family. GatB subfamily. In terms of assembly, heterotrimer of A, B and C subunits.

The catalysed reaction is L-glutamyl-tRNA(Gln) + L-glutamine + ATP + H2O = L-glutaminyl-tRNA(Gln) + L-glutamate + ADP + phosphate + H(+). It catalyses the reaction L-aspartyl-tRNA(Asn) + L-glutamine + ATP + H2O = L-asparaginyl-tRNA(Asn) + L-glutamate + ADP + phosphate + 2 H(+). Allows the formation of correctly charged Asn-tRNA(Asn) or Gln-tRNA(Gln) through the transamidation of misacylated Asp-tRNA(Asn) or Glu-tRNA(Gln) in organisms which lack either or both of asparaginyl-tRNA or glutaminyl-tRNA synthetases. The reaction takes place in the presence of glutamine and ATP through an activated phospho-Asp-tRNA(Asn) or phospho-Glu-tRNA(Gln). The polypeptide is Aspartyl/glutamyl-tRNA(Asn/Gln) amidotransferase subunit B (Mycoplasmopsis synoviae (strain 53) (Mycoplasma synoviae)).